Here is a 936-residue protein sequence, read N- to C-terminus: Aftiphilin (936 aa).

The interval 1-36 is disordered; sequence MEPDIIRMYSSSPPPLDNGAEDDDDDEFGEFGGFSE. Residues 1-523 are interaction with AP1G1, AP1G2, GGA1 and GGA3; sequence MEPDIIRMYS…ARKSSGTGTE (523 aa). Acidic residues predominate over residues 19–29; it reads GAEDDDDDEFG. The WXXF motif 1 signature appears at 28-31; the sequence is FGEF. Phosphoserine is present on S151. 2 disordered regions span residues 197 to 216 and 374 to 409; these read TDDLDNVADSKGRKPLSTHS and KTSDDEVGSPKEESRKFTNFQSPNIDPTEENDLDDS. Over residues 374–389 the composition is skewed to basic and acidic residues; that stretch reads KTSDDEVGSPKEESRK. Residues 386-610 form an interaction with AP1G1 region; sequence ESRKFTNFQS…EAWQSHRTDE (225 aa). Phosphoserine is present on S395. The short motif at 432 to 435 is the WXXF motif 2 element; the sequence is FGDF. Positions 436-438 match the WXXF motif 3 (partial) motif; it reads GDF. The WXXF motif 4 motif lies at 478-481; the sequence is FGEF. S518 bears the Phosphoserine mark. The interval 589–637 is disordered; it reads GDQQATESHHRKEAWQSHRTDENIDTPGTPKTHSVPSATSKGAVASGHL. A compositionally biased stretch (basic and acidic residues) spans 595-610; it reads ESHHRKEAWQSHRTDE. A Phosphothreonine modification is found at T617. Residues 617–628 show a composition bias toward polar residues; it reads TPKTHSVPSATS. Residues 716–718 carry the CLTCL1/Clathrin-binding motif; that stretch reads YQW. Positions 825–829 are clathrin-binding; that stretch reads LLNLD.

Self-associates. Interacts with GGA1 (via GAE domain). Interacts with GGA3 (via GAE domain), AP1G1 (via GAE domain) and AP1G2 (via GAE domain). Component of the aftiphilin/p200/gamma-synergin complex, at least composed of AFTPH/aftiphilin, HEATR5B/p200a and SYNRG/gamma-synergin, which plays a role in the AP1G1/AP-1-mediated protein trafficking from early to recycling endosomes. Within the complex interacts with HEATR5B/p200a and SYNRG/gamma-synergin; the interactions are direct. Interacts with AP1G1/AP-1; the interaction is required to recruit AFTPH/aftiphilin to the perinuclear region of the cell. Interacts with CLTCL1/Clathrin.

The protein localises to the cytoplasm. It is found in the perinuclear region. Its subcellular location is the cytoplasmic vesicle. The protein resides in the clathrin-coated vesicle. Functionally, component of clathrin-coated vesicles. Component of the aftiphilin/p200/gamma-synergin complex, which plays roles in AP1G1/AP-1-mediated protein trafficking including the trafficking of transferrin from early to recycling endosomes, and the membrane trafficking of furin and the lysosomal enzyme cathepsin D between the trans-Golgi network (TGN) and endosomes. This chain is Aftiphilin (AFTPH), found in Homo sapiens (Human).